We begin with the raw amino-acid sequence, 532 residues long: Pre-rRNA-processing protein pro-1 (532 aa).

WD repeat units follow at residues 136–175 (AHYQ…SADR) and 287–326 (GHSD…CLKV). The tract at residues 435–464 (TLGDDEDDAPEVGNQRRQNKKNNKKNRKLQ) is disordered. The stretch at 445–526 (EVGNQRRQNK…INRQMYEFVA (82 aa)) forms a coiled coil. Residues 451–464 (RQNKKNNKKNRKLQ) show a composition bias toward basic residues.

This sequence belongs to the WD repeat IPI3/WDR18 family. As to quaternary structure, component of the PELP1 complex, composed of at least PELP1, TEX10 and WDR18. The complex interacts with pre-60S ribosome particles.

It is found in the nucleus. The protein localises to the nucleolus. The protein resides in the nucleoplasm. Its function is as follows. Component of the PELP1 complex involved in the nucleolar steps of 28S rRNA maturation and the subsequent nucleoplasmic transit of the pre-60S ribosomal subunit. Required for processing ITS2 sequences from rRNA intermediates during 26S rRNA maturation. Required in the soma to promote normal proliferation and prevent germline tumor formation. This is Pre-rRNA-processing protein pro-1 (pro-1) from Caenorhabditis briggsae.